The sequence spans 461 residues: Protein DVR-1 homolog (461 aa).

The N-terminal stretch at 1–30 (MEYSRKTYLDLNIMAKYILILSLFFGPGLS) is a signal peptide. The propeptide occupies 31-338 (WDVFYSGDED…QKKGGKRPRK (308 aa)). A glycan (N-linked (GlcNAc...) asparagine) is linked at Asn149. Residues 317-351 (SHLRRNRRAATRQKKGGKRPRKPDTDNDIASRDSA) form a disordered region. Residues 318–337 (HLRRNRRAATRQKKGGKRPR) are compositionally biased toward basic residues. A compositionally biased stretch (basic and acidic residues) spans 338 to 347 (KPDTDNDIAS). 3 cysteine pairs are disulfide-bonded: Cys360–Cys426, Cys389–Cys458, and Cys393–Cys460. Asn402 is a glycosylation site (N-linked (GlcNAc...) asparagine).

The protein belongs to the TGF-beta family. In terms of assembly, homodimer; disulfide-linked.

It is found in the secreted. This chain is Protein DVR-1 homolog (DVR1), found in Strongylocentrotus purpuratus (Purple sea urchin).